Consider the following 162-residue polypeptide: GTP-dependent dephospho-CoA kinase (162 aa).

D40, V41, V42, D59, K61, and E111 together coordinate GTP.

It belongs to the GTP-dependent DPCK family.

It catalyses the reaction 3'-dephospho-CoA + GTP = GDP + CoA + H(+). The protein operates within cofactor biosynthesis; coenzyme A biosynthesis. In terms of biological role, catalyzes the GTP-dependent phosphorylation of the 3'-hydroxyl group of dephosphocoenzyme A to form coenzyme A (CoA). The protein is GTP-dependent dephospho-CoA kinase of Sulfurisphaera tokodaii (strain DSM 16993 / JCM 10545 / NBRC 100140 / 7) (Sulfolobus tokodaii).